Reading from the N-terminus, the 57-residue chain is Large ribosomal subunit protein bL33 (57 aa).

The protein belongs to the bacterial ribosomal protein bL33 family.

The chain is Large ribosomal subunit protein bL33 from Shewanella sp. (strain MR-4).